The following is a 355-amino-acid chain: MSGQPKRLMVMAGGTGGHVFPGLAVAHHLMSQGWQVRWLGTADRMEADLVPKHGIDIDFIRISGLRGKGVKALLAAPLRIFNAWRQARAIMKRFKPDVVLGMGGYVSGPGGLAAWSLGIPVVLHEQNGIAGLTNQWLAKIATTVMQAFPGAFPNAEVVGNPVRTDVLALPLPQVRLAGRDGPIRVLVVGGSQGARVLNQTMPQVAARLGDTVTIWHQSGKGVQHTVEQAYAGVGQPQHKVTEFIDDMAAAYAWADVVVCRSGALTVSEIAAAGLPAIFVPFQHKDRQQYWNALPLENAGAAKIFEQPQFTVEAVADTLAGWSREALLTMAERARAVSIPDATERVASEVSRVART.

UDP-N-acetyl-alpha-D-glucosamine is bound by residues 15–17 (TGG), asparagine 127, arginine 163, serine 191, isoleucine 244, 263–268 (ALTVSE), and glutamine 288.

This sequence belongs to the glycosyltransferase 28 family. MurG subfamily.

The protein localises to the cell inner membrane. It carries out the reaction di-trans,octa-cis-undecaprenyl diphospho-N-acetyl-alpha-D-muramoyl-L-alanyl-D-glutamyl-meso-2,6-diaminopimeloyl-D-alanyl-D-alanine + UDP-N-acetyl-alpha-D-glucosamine = di-trans,octa-cis-undecaprenyl diphospho-[N-acetyl-alpha-D-glucosaminyl-(1-&gt;4)]-N-acetyl-alpha-D-muramoyl-L-alanyl-D-glutamyl-meso-2,6-diaminopimeloyl-D-alanyl-D-alanine + UDP + H(+). The protein operates within cell wall biogenesis; peptidoglycan biosynthesis. Cell wall formation. Catalyzes the transfer of a GlcNAc subunit on undecaprenyl-pyrophosphoryl-MurNAc-pentapeptide (lipid intermediate I) to form undecaprenyl-pyrophosphoryl-MurNAc-(pentapeptide)GlcNAc (lipid intermediate II). In Salmonella enteritidis PT4 (strain P125109), this protein is UDP-N-acetylglucosamine--N-acetylmuramyl-(pentapeptide) pyrophosphoryl-undecaprenol N-acetylglucosamine transferase.